Reading from the N-terminus, the 445-residue chain is UPF0210 protein Ccon26_06850 (445 aa).

This sequence belongs to the UPF0210 family. As to quaternary structure, homodimer.

The sequence is that of UPF0210 protein Ccon26_06850 from Campylobacter concisus (strain 13826).